We begin with the raw amino-acid sequence, 212 residues long: Translation initiation factor IF-3 (212 aa).

The protein belongs to the IF-3 family. In terms of assembly, monomer.

It localises to the cytoplasm. IF-3 binds to the 30S ribosomal subunit and shifts the equilibrium between 70S ribosomes and their 50S and 30S subunits in favor of the free subunits, thus enhancing the availability of 30S subunits on which protein synthesis initiation begins. The chain is Translation initiation factor IF-3 from Synechococcus sp. (strain CC9311).